The chain runs to 265 residues: Putative hydro-lyase PA2116 (265 aa).

Belongs to the D-glutamate cyclase family.

This Pseudomonas aeruginosa (strain ATCC 15692 / DSM 22644 / CIP 104116 / JCM 14847 / LMG 12228 / 1C / PRS 101 / PAO1) protein is Putative hydro-lyase PA2116.